We begin with the raw amino-acid sequence, 95 residues long: Protein TusB (95 aa).

Belongs to the DsrH/TusB family. Heterohexamer, formed by a dimer of trimers. The hexameric TusBCD complex contains 2 copies each of TusB, TusC and TusD. The TusBCD complex interacts with TusE.

It localises to the cytoplasm. Functionally, part of a sulfur-relay system required for 2-thiolation of 5-methylaminomethyl-2-thiouridine (mnm(5)s(2)U) at tRNA wobble positions. The chain is Protein TusB from Escherichia coli O45:K1 (strain S88 / ExPEC).